We begin with the raw amino-acid sequence, 100 residues long: Aspartyl/glutamyl-tRNA(Asn/Gln) amidotransferase subunit C (100 aa).

This sequence belongs to the GatC family. Heterotrimer of A, B and C subunits.

The catalysed reaction is L-glutamyl-tRNA(Gln) + L-glutamine + ATP + H2O = L-glutaminyl-tRNA(Gln) + L-glutamate + ADP + phosphate + H(+). It catalyses the reaction L-aspartyl-tRNA(Asn) + L-glutamine + ATP + H2O = L-asparaginyl-tRNA(Asn) + L-glutamate + ADP + phosphate + 2 H(+). Functionally, allows the formation of correctly charged Asn-tRNA(Asn) or Gln-tRNA(Gln) through the transamidation of misacylated Asp-tRNA(Asn) or Glu-tRNA(Gln) in organisms which lack either or both of asparaginyl-tRNA or glutaminyl-tRNA synthetases. The reaction takes place in the presence of glutamine and ATP through an activated phospho-Asp-tRNA(Asn) or phospho-Glu-tRNA(Gln). This Streptococcus gordonii (strain Challis / ATCC 35105 / BCRC 15272 / CH1 / DL1 / V288) protein is Aspartyl/glutamyl-tRNA(Asn/Gln) amidotransferase subunit C.